We begin with the raw amino-acid sequence, 210 residues long: Orotate phosphoribosyltransferase (210 aa).

5-phospho-alpha-D-ribose 1-diphosphate-binding positions include arginine 94, lysine 98, histidine 100, and 120–128; that span reads EDLISTGGS. An orotate-binding site is contributed by serine 124.

It belongs to the purine/pyrimidine phosphoribosyltransferase family. PyrE subfamily. Homodimer. The cofactor is Mg(2+).

It catalyses the reaction orotidine 5'-phosphate + diphosphate = orotate + 5-phospho-alpha-D-ribose 1-diphosphate. Its pathway is pyrimidine metabolism; UMP biosynthesis via de novo pathway; UMP from orotate: step 1/2. In terms of biological role, catalyzes the transfer of a ribosyl phosphate group from 5-phosphoribose 1-diphosphate to orotate, leading to the formation of orotidine monophosphate (OMP). The protein is Orotate phosphoribosyltransferase of Bacillus cereus (strain B4264).